The following is a 306-amino-acid chain: Aspartate carbamoyltransferase catalytic subunit (306 aa).

Carbamoyl phosphate-binding residues include Arg55 and Thr56. L-aspartate is bound at residue Lys84. Carbamoyl phosphate is bound by residues Arg105, His133, and Gln136. Positions 166 and 227 each coordinate L-aspartate. Carbamoyl phosphate-binding residues include Leu265 and Pro266.

It belongs to the aspartate/ornithine carbamoyltransferase superfamily. ATCase family. Heterododecamer (2C3:3R2) of six catalytic PyrB chains organized as two trimers (C3), and six regulatory PyrI chains organized as three dimers (R2).

The catalysed reaction is carbamoyl phosphate + L-aspartate = N-carbamoyl-L-aspartate + phosphate + H(+). Its pathway is pyrimidine metabolism; UMP biosynthesis via de novo pathway; (S)-dihydroorotate from bicarbonate: step 2/3. In terms of biological role, catalyzes the condensation of carbamoyl phosphate and aspartate to form carbamoyl aspartate and inorganic phosphate, the committed step in the de novo pyrimidine nucleotide biosynthesis pathway. This chain is Aspartate carbamoyltransferase catalytic subunit, found in Aeromonas hydrophila subsp. hydrophila (strain ATCC 7966 / DSM 30187 / BCRC 13018 / CCUG 14551 / JCM 1027 / KCTC 2358 / NCIMB 9240 / NCTC 8049).